Consider the following 431-residue polypeptide: 4-hydroxy-3-methylbut-2-en-1-yl diphosphate synthase (flavodoxin) (431 aa).

Basic and acidic residues predominate over residues 1–12 (MNKLENPLRDDV). The tract at residues 1–20 (MNKLENPLRDDVAGPAPRHQ) is disordered. C310, C313, C356, and E363 together coordinate [4Fe-4S] cluster.

Belongs to the IspG family. [4Fe-4S] cluster serves as cofactor.

The enzyme catalyses (2E)-4-hydroxy-3-methylbut-2-enyl diphosphate + oxidized [flavodoxin] + H2O + 2 H(+) = 2-C-methyl-D-erythritol 2,4-cyclic diphosphate + reduced [flavodoxin]. The protein operates within isoprenoid biosynthesis; isopentenyl diphosphate biosynthesis via DXP pathway; isopentenyl diphosphate from 1-deoxy-D-xylulose 5-phosphate: step 5/6. Functionally, converts 2C-methyl-D-erythritol 2,4-cyclodiphosphate (ME-2,4cPP) into 1-hydroxy-2-methyl-2-(E)-butenyl 4-diphosphate. In Rhodopseudomonas palustris (strain TIE-1), this protein is 4-hydroxy-3-methylbut-2-en-1-yl diphosphate synthase (flavodoxin).